A 300-amino-acid chain; its full sequence is Ribosomal RNA small subunit methyltransferase H (300 aa).

S-adenosyl-L-methionine-binding positions include 33-35 (GGH), Asp-52, Phe-79, Asp-100, and Gln-107.

Belongs to the methyltransferase superfamily. RsmH family.

Its subcellular location is the cytoplasm. The enzyme catalyses cytidine(1402) in 16S rRNA + S-adenosyl-L-methionine = N(4)-methylcytidine(1402) in 16S rRNA + S-adenosyl-L-homocysteine + H(+). Functionally, specifically methylates the N4 position of cytidine in position 1402 (C1402) of 16S rRNA. The chain is Ribosomal RNA small subunit methyltransferase H from Mycoplasmopsis agalactiae (strain NCTC 10123 / CIP 59.7 / PG2) (Mycoplasma agalactiae).